The following is a 231-amino-acid chain: MGQARDRVNYSFKRLKEIPEELRPREKLLKLGPENLSDEELLAVILGSGSKGADVLSLSKELIKMGWEELEKKSVEELLKVRGLGLVKALQVKALVELSKRFKGGKSRISIRNPQEAFEFLKDKFDERRESLIALYLDLSNRLLDWEVVAIGNVNTVFSKPKDILFKAVKLSANGIIIAHNHPQGEPSPSNEDLNFTERLKKACELLGFELLDHLILSEGRYFSFREEGVL.

Residues 110 to 231 (SIRNPQEAFE…YFSFREEGVL (122 aa)) enclose the MPN domain. His180, His182, and Asp193 together coordinate Zn(2+). The JAMM motif signature appears at 180 to 193 (HNHPQGEPSPSNED).

Belongs to the UPF0758 family.

This is UPF0758 protein aq_1610 from Aquifex aeolicus (strain VF5).